The chain runs to 202 residues: LexA repressor (202 aa).

The segment at residues 28-48 (QQEIARAFGFRSLGTVRNYLV) is a DNA-binding region (H-T-H motif). Catalysis depends on for autocatalytic cleavage activity residues Ser-120 and Lys-157.

The protein belongs to the peptidase S24 family. Homodimer.

It carries out the reaction Hydrolysis of Ala-|-Gly bond in repressor LexA.. Functionally, represses a number of genes involved in the response to DNA damage (SOS response), including recA and lexA. In the presence of single-stranded DNA, RecA interacts with LexA causing an autocatalytic cleavage which disrupts the DNA-binding part of LexA, leading to derepression of the SOS regulon and eventually DNA repair. This is LexA repressor from Syntrophotalea carbinolica (strain DSM 2380 / NBRC 103641 / GraBd1) (Pelobacter carbinolicus).